The primary structure comprises 416 residues: Pectin acetylesterase 3 (416 aa).

Positions 1 to 25 (MKSVLRIAAAIFWLWLFIVLGVIGS) are cleaved as a signal peptide. Asn-131 carries an N-linked (GlcNAc...) asparagine glycan. Residues Ser-198 and Asp-294 each act as charge relay system in the active site. Asn-324 is a glycosylation site (N-linked (GlcNAc...) asparagine). Catalysis depends on His-361, which acts as the Charge relay system.

This sequence belongs to the pectinacetylesterase family.

The protein localises to the secreted. It localises to the cell wall. In terms of biological role, hydrolyzes acetyl esters in homogalacturonan regions of pectin. In type I primary cell wall, galacturonic acid residues of pectin can be acetylated at the O-2 and O-3 positions. Decreasing the degree of acetylation of pectin gels in vitro alters their physical properties. The chain is Pectin acetylesterase 3 from Arabidopsis thaliana (Mouse-ear cress).